The sequence spans 323 residues: MKILNSLEGYIDTYNPWKNTYALFRSLLGFSTLLVLLFNSTDILFSYSANNVTCENVYIPTAFCFAKEYSINFEIIRYLMIFILTLVVIGWRPRFTGLFHWYICYSIQTSALTIDGGEQIATVLSFLILPVTLLDSRRNHWNIKKNNNESFTKKTVLFYIMTIIKIQVFIIYLNAALERLKNKEWAEGTAIYYFFSDPVFGLPEYQLNLMNPLLESNFIVVITWLVTIFELFLAASIISNIRIKRIALVLGILFHIGIIFSIGIVSFGLIMISALIIYLHPVQQNITMNWCSPLFKYIYVKGKRNFKRIGGESVKFLTKLFHS.

Transmembrane regions (helical) follow at residues 27–49 (LLGF…SYSA), 70–92 (SINF…IGWR), 112–134 (LTID…VTLL), 155–177 (TVLF…NAAL), 219–241 (IVVI…ISNI), and 248–270 (LVLG…FGLI).

The protein localises to the cell membrane. Its function is as follows. Required for the maturation of SdpC to SDP. Not required for SdpC signal peptide cleavage, secretion from the cell or disulfide bond formation. This is Sporulation-delaying protein SdpB from Bacillus subtilis (strain 168).